Reading from the N-terminus, the 485-residue chain is METVQLRNNPRRHLKKLSEESLNKQPEEVFDVLEKLGEGSYGSVYKASHKETSQIVAIKQIPVESDLQEIIKEISIMQQCDSPHVVKYYGSYFKNTDLWIVMEFCGGGSVSDIIRLRKQTLNEDEIATILQSTLKGLEYLHFMRKIHRDIKAGNILLSCEGTAKLADFGVAGQLTDTMAKRNTVIGTPFWMAPEVIQEIGYNCVADIWSLGITAIEMAEGKPPYAEIHPMRAIFMIPSNPPPTFRKPELWSKDFVDFINLCLVKNPELRSSATELLQHPFIKAAKGESILRHLLNAAQDEKLKRTELKQREVEPEEKENVNEDEVDVGTMVQAGGKDLNTMKELGMMSEGADGTMVEKDKLETQMGTMLINDEDEEEETGTMKQCTEPAQQAKPSFLEYFEQKENQFGTPEKTSPTSTDPSEWKIPLNGDYSFLKDWSVAEVQLKLNSLDPMMEREIEEIHHKYQAKRQPILEAIESKKRRQQNF.

A Protein kinase domain is found at 30–281 (FDVLEKLGEG…ATELLQHPFI (252 aa)). Residues 36-44 (LGEGSYGSV) and K59 contribute to the ATP site. The active-site Proton acceptor is D149. T183 carries the phosphothreonine; by autocatalysis modification. Positions 431 to 478 (YSFLKDWSVAEVQLKLNSLDPMMEREIEEIHHKYQAKRQPILEAIESK) constitute an SARAH domain.

Belongs to the protein kinase superfamily. STE Ser/Thr protein kinase family. STE20 subfamily. In terms of assembly, homodimer; mediated via the coiled-coil region. The cofactor is Mg(2+). Autophosphorylated on Thr-183. Post-translationally, proteolytically cleaved by caspase-3 during apoptosis at Asp-326 resulting in a 37 kDa form. Proteolytic cleavage results in kinase activation and nuclear translocation of the truncated form (MST1/N).

The protein localises to the cytoplasm. It is found in the nucleus. It catalyses the reaction L-seryl-[protein] + ATP = O-phospho-L-seryl-[protein] + ADP + H(+). The catalysed reaction is L-threonyl-[protein] + ATP = O-phospho-L-threonyl-[protein] + ADP + H(+). With respect to regulation, the C-terminal non-catalytic region inhibits the kinase activity, the enzyme is activated by caspase-cleavage. Homodimerization and autophosphorylation of Thr-183 is also required for full activation. Functionally, stress-activated, pro-apoptotic kinase which, following caspase-cleavage, enters the nucleus and induces chromatin condensation followed by internucleosomal DNA fragmentation. Key component of the Hippo signaling pathway which plays a pivotal role in organ size control and tumor suppression by restricting proliferation and promoting apoptosis. The core of this pathway is composed of a kinase cascade wherein stk3/mst2 and stk4/mst1, in complex with its regulatory protein sav1, phosphorylates and activates lats1/2 in complex with its regulatory protein mob1, which in turn phosphorylates and inactivates yap1 oncoprotein and wwtr1/taz. Phosphorylation of yap1 by lats2 inhibits its translocation into the nucleus to regulate cellular genes important for cell proliferation, cell death, and cell migration. Phosphorylates 'Ser-14' of histone H2B (H2BS14ph) during apoptosis. The chain is Serine/threonine-protein kinase 4 (stk4) from Xenopus laevis (African clawed frog).